Consider the following 123-residue polypeptide: Small ribosomal subunit protein uS12cz/uS12cy (123 aa).

It belongs to the universal ribosomal protein uS12 family. In terms of assembly, part of the 30S ribosomal subunit.

The protein resides in the plastid. It localises to the chloroplast. With S4 and S5 plays an important role in translational accuracy. Located at the interface of the 30S and 50S subunits. This chain is Small ribosomal subunit protein uS12cz/uS12cy (rps12-A), found in Atropa belladonna (Belladonna).